The primary structure comprises 215 residues: Programmed cell death protein 10 homolog (215 aa).

This sequence belongs to the PDCD10 family. As to quaternary structure, interacts with gck-1. As to expression, expressed in pharynx, intestine, germline, vulva and excretory canals.

It localises to the cytoplasm. It is found in the apical cell membrane. Its function is as follows. Involved in excretory canal elongation during postembryonic development. Plays a role in promoting Golgi stability, ER integrity and vesicle transport probably by regulating the activation of Rho GTPase cdc-42. Involved in fertility. The protein is Programmed cell death protein 10 homolog of Caenorhabditis elegans.